We begin with the raw amino-acid sequence, 286 residues long: MRYFRLCIISLLATLPLAVHASPQPLEQIKLSESQLSGSVGMIEMDLASGRTLTAWRADGRFPMMSTFKVVLCGAVLARVDAGDEQLERKIHYRQQDLVDYSPVSEKHLADGMTVGELCAAAITMSDNSAANLLLATVGGPAGLTAFLRQIGDNVTRLDRWETELNEALPGDARDTTTPASMAATLRKLLTSQRLSARSQRQLLQWMVDDRVAGPLIRSVLPAGWFIADKTGASERGARGIVALLGPNNKAERIVVIYLRDTPASMAERNQQIAGIGAALIEHWQR.

The signal sequence occupies residues 1-21; that stretch reads MRYFRLCIISLLATLPLAVHA. The active-site Acyl-ester intermediate is the Ser-66. A disulfide bond links Cys-73 and Cys-119. The active-site Proton acceptor is Glu-164. Residue 230-232 participates in substrate binding; it reads KTG.

The protein belongs to the class-A beta-lactamase family.

It carries out the reaction a beta-lactam + H2O = a substituted beta-amino acid. Functionally, hydrolyzes ceftazidime and cefotaxime. The chain is Beta-lactamase SHV-34 (bla) from Escherichia coli.